A 434-amino-acid chain; its full sequence is 26S proteasome regulatory subunit 6A (434 aa).

Ala-2 is modified (N-acetylalanine). A Phosphotyrosine modification is found at Tyr-180. 222–229 (GPPGTGKT) lines the ATP pocket.

Belongs to the AAA ATPase family. In terms of processing, N-acetylated by NAT1.

Its subcellular location is the cytoplasm. The protein localises to the nucleus. The 26S proteasome is involved in the ATP-dependent degradation of ubiquitinated proteins. The regulatory (or ATPase) complex confers ATP dependency and substrate specificity to the 26S complex. The sequence is that of 26S proteasome regulatory subunit 6A (RPT5) from Saccharomyces cerevisiae (strain ATCC 204508 / S288c) (Baker's yeast).